A 70-amino-acid polypeptide reads, in one-letter code: uncharacterized protein (70 aa).

This is an uncharacterized protein from Torque teno tamarin virus (isolate So-TTV2).